A 469-amino-acid chain; its full sequence is 3-isopropylmalate dehydratase large subunit (469 aa).

Cys-350, Cys-410, and Cys-413 together coordinate [4Fe-4S] cluster.

This sequence belongs to the aconitase/IPM isomerase family. LeuC type 1 subfamily. Heterodimer of LeuC and LeuD. [4Fe-4S] cluster serves as cofactor.

It carries out the reaction (2R,3S)-3-isopropylmalate = (2S)-2-isopropylmalate. The protein operates within amino-acid biosynthesis; L-leucine biosynthesis; L-leucine from 3-methyl-2-oxobutanoate: step 2/4. Catalyzes the isomerization between 2-isopropylmalate and 3-isopropylmalate, via the formation of 2-isopropylmaleate. The chain is 3-isopropylmalate dehydratase large subunit from Rhizobium rhizogenes (strain K84 / ATCC BAA-868) (Agrobacterium radiobacter).